We begin with the raw amino-acid sequence, 433 residues long: Histidinol dehydrogenase homolog (433 aa).

Residues glutamine 249 and histidine 252 each contribute to the Zn(2+) site. Catalysis depends on proton acceptor residues glutamate 319 and histidine 320. The Zn(2+) site is built by aspartate 353 and histidine 412.

It belongs to the histidinol dehydrogenase family. Zn(2+) serves as cofactor.

This Ruegeria pomeroyi (strain ATCC 700808 / DSM 15171 / DSS-3) (Silicibacter pomeroyi) protein is Histidinol dehydrogenase homolog.